Consider the following 580-residue polypeptide: Nuclear body protein SP140-like protein (580 aa).

The HSR domain maps to 33-149 (SLQRLFTEDQ…IYKSFKNAIQ (117 aa)). The segment at 155–293 (QESDRKEREE…RSRASRKHKD (139 aa)) is disordered. A compositionally biased stretch (basic and acidic residues) spans 156–170 (ESDRKEREERPDIKL). Lysine 169 participates in a covalent cross-link: Glycyl lysine isopeptide (Lys-Gly) (interchain with G-Cter in SUMO2). At serine 180 the chain carries Phosphoserine. The span at 207 to 219 (KPKRKRRKKKGHG) shows a compositional bias: basic residues. The span at 224-236 (GTRTQKNNQQNDN) shows a compositional bias: polar residues. Positions 280–290 (QKRVRSRASRK) are enriched in basic residues. Lysine 292 is covalently cross-linked (Glycyl lysine isopeptide (Lys-Gly) (interchain with G-Cter in SUMO2)). The SAND domain occupies 293-374 (DETVDFQAPL…RRLMEEGSLP (82 aa)). A PHD-type zinc finger spans residues 403–449 (LDECEVCRDGGELFCCDTCSRVFHEDCHIPPVESEKTPWNCIFCRMK). One can recognise a Bromo domain in the interval 467 to 570 (QMCPEEQLKC…AEFEKDFKEV (104 aa)).

This is Nuclear body protein SP140-like protein (SP140L) from Homo sapiens (Human).